Consider the following 440-residue polypeptide: Xaa-Pro dipeptidase (440 aa).

Mn(2+) is bound by residues aspartate 244, aspartate 255, histidine 335, glutamate 380, and glutamate 419.

The protein belongs to the peptidase M24B family. Bacterial-type prolidase subfamily. Requires Mn(2+) as cofactor.

It catalyses the reaction Xaa-L-Pro dipeptide + H2O = an L-alpha-amino acid + L-proline. Functionally, splits dipeptides with a prolyl residue in the C-terminal position. The protein is Xaa-Pro dipeptidase of Shewanella baltica (strain OS185).